The primary structure comprises 327 residues: Fructose-1,6-bisphosphatase class 1 (327 aa).

4 residues coordinate Mg(2+): glutamate 84, aspartate 103, leucine 105, and aspartate 106. Substrate contacts are provided by residues 106-109, asparagine 198, and lysine 264; that span reads DGSS. Glutamate 270 contacts Mg(2+).

The protein belongs to the FBPase class 1 family. In terms of assembly, homotetramer. Mg(2+) serves as cofactor.

It localises to the cytoplasm. It catalyses the reaction beta-D-fructose 1,6-bisphosphate + H2O = beta-D-fructose 6-phosphate + phosphate. It functions in the pathway carbohydrate biosynthesis; gluconeogenesis. The chain is Fructose-1,6-bisphosphatase class 1 from Psychrobacter cryohalolentis (strain ATCC BAA-1226 / DSM 17306 / VKM B-2378 / K5).